Reading from the N-terminus, the 204-residue chain is Proteasome subunit beta 2 (204 aa).

Positions 1–6 (MEVLPG) are cleaved as a propeptide — removed in mature form; by autocatalysis. Residue Thr-7 is the Nucleophile of the active site.

Belongs to the peptidase T1B family. The 20S proteasome core is composed of 14 alpha and 14 beta subunits that assemble into four stacked heptameric rings, resulting in a barrel-shaped structure. The two inner rings, each composed of seven catalytic beta subunits, are sandwiched by two outer rings, each composed of seven alpha subunits. The catalytic chamber with the active sites is on the inside of the barrel. Has a gated structure, the ends of the cylinder being occluded by the N-termini of the alpha-subunits. Is capped at one or both ends by the proteasome regulatory ATPase, PAN.

It localises to the cytoplasm. The catalysed reaction is Cleavage of peptide bonds with very broad specificity.. With respect to regulation, the formation of the proteasomal ATPase PAN-20S proteasome complex, via the docking of the C-termini of PAN into the intersubunit pockets in the alpha-rings, triggers opening of the gate for substrate entry. Interconversion between the open-gate and close-gate conformations leads to a dynamic regulation of the 20S proteasome proteolysis activity. Functionally, component of the proteasome core, a large protease complex with broad specificity involved in protein degradation. The polypeptide is Proteasome subunit beta 2 (Thermofilum pendens (strain DSM 2475 / Hrk 5)).